Consider the following 857-residue polypeptide: KH domain-containing protein HEN4 (857 aa).

Basic and acidic residues predominate over residues 1–15 (MERNSVKFHAEKRSG). The interval 1 to 27 (MERNSVKFHAEKRSGAFDPGSGFGSSK) is disordered. KH domains lie at 46-110 (HAAF…KLGA), 149-217 (TVVC…LVSI), 451-521 (DVVF…IMLI), and 541-610 (SITA…IFHI). The segment at 644–755 (SDNPLSIGSH…RGLSDASGGL (112 aa)) is disordered. Polar residues-rich tracts occupy residues 645 to 665 (DNPL…NSSS) and 673 to 688 (SFLS…SRSV). A compositionally biased stretch (basic and acidic residues) spans 718 to 730 (FTMDHSDNSHHLT). Over residues 746–755 (RGLSDASGGL) the composition is skewed to low complexity. One can recognise a KH 5 domain in the interval 775–839 (NTTVEIRVPA…DQTQAAQNLL (65 aa)).

In terms of assembly, interacts with HUA1. Interacts with FLK and PEP.

The protein localises to the nucleus speckle. Functions in floral reproductive organ identity in the third whorl and floral determinacy specification by specifically promoting the processing of AGAMOUS (AG) pre-mRNA. Functions in association with HUA1 and HUA2. The polypeptide is KH domain-containing protein HEN4 (Arabidopsis thaliana (Mouse-ear cress)).